A 316-amino-acid polypeptide reads, in one-letter code: L-lactate dehydrogenase (316 aa).

NAD(+) is bound by residues valine 15, aspartate 37, lysine 42, tyrosine 68, and 82-83 (GL). Substrate is bound by residues glutamine 85, arginine 91, and 123–126 (NPVD). Residues 121–123 (ASN) and threonine 146 contribute to the NAD(+) site. 151 to 154 (DTSR) is a substrate binding site. The beta-D-fructose 1,6-bisphosphate site is built by arginine 156 and histidine 171. Catalysis depends on histidine 178, which acts as the Proton acceptor. Position 222 is a phosphotyrosine (tyrosine 222). Threonine 231 is a substrate binding site.

This sequence belongs to the LDH/MDH superfamily. LDH family. Homotetramer.

It is found in the cytoplasm. It carries out the reaction (S)-lactate + NAD(+) = pyruvate + NADH + H(+). It participates in fermentation; pyruvate fermentation to lactate; (S)-lactate from pyruvate: step 1/1. Its activity is regulated as follows. Allosterically activated by fructose 1,6-bisphosphate (FBP). Its function is as follows. Catalyzes the conversion of lactate to pyruvate. In Borrelia hermsii (strain HS1 / DAH), this protein is L-lactate dehydrogenase.